The primary structure comprises 627 residues: RNA interference defective protein 10 (627 aa).

Disordered stretches follow at residues 1–31 (MSNHRSNFRDYQREGIRANNAGTSGDAVRQN), 467–487 (QRDTDEQYDVHQEGPSNHDQY), and 523–589 (SSVR…SEDY). Basic and acidic residues-rich tracts occupy residues 7 to 16 (NFRDYQREGI), 467 to 478 (QRDTDEQYDVHQ), and 526 to 537 (REPEHPSARSRD).

The protein belongs to the maelstrom family. In terms of assembly, interacts with rde-11 (via RING-type zinc finger domain). Interacts with ergo-1.

In complex with rde-11, required in the endogenous and exogenous siRNA pathway for biogenesis and accumulation of secondary small interfering RNA (siRNA) intermediates, such as 22G-siRNAs derived from ergo-1 targets. This chain is RNA interference defective protein 10, found in Caenorhabditis elegans.